Here is a 447-residue protein sequence, read N- to C-terminus: Probable 3-deoxy-D-manno-octulosonic acid transferase, mitochondrial (447 aa).

Residues 1 to 32 (MKLGVFVYRLYRALTYGVSPLIHLHIRWRRLR) constitute a mitochondrion transit peptide. Glutamate 66 acts as the Proton acceptor in catalysis. Residues 278–279 (PR), 320–322 (LGE), and 347–350 (NLSE) each bind CMP.

The protein belongs to the glycosyltransferase group 1 family. Glycosyltransferase 30 subfamily. As to expression, expressed in leaves, stems and flowers.

It is found in the mitochondrion. It catalyses the reaction lipid IVA (E. coli) + CMP-3-deoxy-beta-D-manno-octulosonate = alpha-Kdo-(2-&gt;6)-lipid IVA (E. coli) + CMP + H(+). The enzyme catalyses alpha-Kdo-(2-&gt;6)-lipid IVA (E. coli) + CMP-3-deoxy-beta-D-manno-octulosonate = alpha-Kdo-(2-&gt;4)-alpha-Kdo-(2-&gt;6)-lipid IVA (E. coli) + CMP + H(+). Its pathway is glycolipid biosynthesis; KDO(2)-lipid A biosynthesis; KDO(2)-lipid A from CMP-3-deoxy-D-manno-octulosonate and lipid IV(A): step 1/4. It participates in glycolipid biosynthesis; KDO(2)-lipid A biosynthesis; KDO(2)-lipid A from CMP-3-deoxy-D-manno-octulosonate and lipid IV(A): step 2/4. In terms of biological role, involved in the biosynthesis of lipid A, a phosphorylated glycolipid that in bacteria anchors the lipopolysaccharide to the outer membrane of the cell. Catalyzes the transfer of two 3-deoxy-D-manno-octulosonate (Kdo) residues from CMP-Kdo to lipid IV(A), the tetraacyldisaccharide-1,4'-bisphosphate precursor of lipid A. Lipid A-like molecules in plants may serve as structural components of the outer membranes of mitochondria and/or chloroplasts, or may be involved in signal transduction or plant defense responses. The sequence is that of Probable 3-deoxy-D-manno-octulosonic acid transferase, mitochondrial (KDTA) from Arabidopsis thaliana (Mouse-ear cress).